The primary structure comprises 73 residues: Large ribosomal subunit protein bL31 (73 aa).

Belongs to the bacterial ribosomal protein bL31 family. Type A subfamily. In terms of assembly, part of the 50S ribosomal subunit.

In terms of biological role, binds the 23S rRNA. The chain is Large ribosomal subunit protein bL31 from Ruegeria sp. (strain TM1040) (Silicibacter sp.).